The sequence spans 166 residues: Putative universal stress protein SE_1385 (166 aa).

This sequence belongs to the universal stress protein A family.

It localises to the cytoplasm. This Staphylococcus epidermidis (strain ATCC 12228 / FDA PCI 1200) protein is Putative universal stress protein SE_1385.